Consider the following 292-residue polypeptide: Formamidopyrimidine-DNA glycosylase (292 aa).

Pro-2 (schiff-base intermediate with DNA) is an active-site residue. Residue Glu-3 is the Proton donor of the active site. Lys-60 serves as the catalytic Proton donor; for beta-elimination activity. DNA-binding residues include His-109, Arg-128, and Arg-173. An FPG-type zinc finger spans residues 258–292; sequence NVYRRTGRECRKCGNLIERQKITGRSTHWCPNCQK. Arg-282 acts as the Proton donor; for delta-elimination activity in catalysis.

The protein belongs to the FPG family. In terms of assembly, monomer. It depends on Zn(2+) as a cofactor.

It catalyses the reaction Hydrolysis of DNA containing ring-opened 7-methylguanine residues, releasing 2,6-diamino-4-hydroxy-5-(N-methyl)formamidopyrimidine.. It carries out the reaction 2'-deoxyribonucleotide-(2'-deoxyribose 5'-phosphate)-2'-deoxyribonucleotide-DNA = a 3'-end 2'-deoxyribonucleotide-(2,3-dehydro-2,3-deoxyribose 5'-phosphate)-DNA + a 5'-end 5'-phospho-2'-deoxyribonucleoside-DNA + H(+). Its function is as follows. Involved in base excision repair of DNA damaged by oxidation or by mutagenic agents. Acts as a DNA glycosylase that recognizes and removes damaged bases. Has a preference for oxidized purines, such as 7,8-dihydro-8-oxoguanine (8-oxoG). Has AP (apurinic/apyrimidinic) lyase activity and introduces nicks in the DNA strand. Cleaves the DNA backbone by beta-delta elimination to generate a single-strand break at the site of the removed base with both 3'- and 5'-phosphates. This Prochlorococcus marinus (strain MIT 9301) protein is Formamidopyrimidine-DNA glycosylase.